The following is a 352-amino-acid chain: MELLNATLAKIYGLDKEAMVKAQAHQDILIKPQGSLGKLEAIVVQLAGIQGDAKPKTAKKAIITMAGDHGIIDEKFHNWPKEVTVQMLQNFAHGGAAINVLSRQVGARNVVVALGVATPMAADPNIINRNIAPGTNNMVHGPAMTREQAVKAIEVGIEIVNAEVKKGLDLVGTGDMGIGNTSPSAAICSVITGRSLEDVTGRGTGASDEQMKLKRNAIAKAISLNNPDAKDAIDVLSKVGGYEIGGLAGVILGAAANRVAVVVDGFISGAAALIAYTICPQVKDFMFAAHQSVEPGHRILLEHMGLDAILKMDMRLGEGTGAALAMNIIEAANRIQHEMASFADAGVSEKQS.

Glutamate 318 functions as the Proton acceptor in the catalytic mechanism.

It belongs to the CobT family.

It catalyses the reaction 5,6-dimethylbenzimidazole + nicotinate beta-D-ribonucleotide = alpha-ribazole 5'-phosphate + nicotinate + H(+). It participates in nucleoside biosynthesis; alpha-ribazole biosynthesis; alpha-ribazole from 5,6-dimethylbenzimidazole: step 1/2. Its function is as follows. Catalyzes the synthesis of alpha-ribazole-5'-phosphate from nicotinate mononucleotide (NAMN) and 5,6-dimethylbenzimidazole (DMB). This Dehalococcoides mccartyi (strain ATCC BAA-2100 / JCM 16839 / KCTC 5957 / BAV1) protein is Nicotinate-nucleotide--dimethylbenzimidazole phosphoribosyltransferase.